A 480-amino-acid chain; its full sequence is Selenium-binding protein 3 (480 aa).

Selenite contacts are provided by Cys-12 and Cys-13.

Belongs to the selenium-binding protein family. Expressed in young seedlings, mostly in roots.

The chain is Selenium-binding protein 3 (SBP3) from Arabidopsis thaliana (Mouse-ear cress).